The chain runs to 333 residues: Fructose-1,6-bisphosphatase class 1 1 (333 aa).

Residues Glu81, Asp100, Leu102, and Asp103 each coordinate Mg(2+). Residues 103–106 (DGSS) and Asn191 each bind substrate. Residue Glu263 coordinates Mg(2+).

This sequence belongs to the FBPase class 1 family. In terms of assembly, homotetramer. Mg(2+) serves as cofactor.

It is found in the cytoplasm. It catalyses the reaction beta-D-fructose 1,6-bisphosphate + H2O = beta-D-fructose 6-phosphate + phosphate. It participates in carbohydrate biosynthesis; Calvin cycle. This is Fructose-1,6-bisphosphatase class 1 1 from Cereibacter sphaeroides (strain ATCC 17029 / ATH 2.4.9) (Rhodobacter sphaeroides).